A 258-amino-acid chain; its full sequence is Octanoyltransferase (258 aa).

Residues Asn-42–Leu-226 form the BPL/LPL catalytic domain. Residues Arg-80 to His-87, Ala-156 to Gly-158, and Gly-169 to Ser-171 contribute to the substrate site. Cys-187 functions as the Acyl-thioester intermediate in the catalytic mechanism.

The protein belongs to the LipB family.

The protein localises to the cytoplasm. The enzyme catalyses octanoyl-[ACP] + L-lysyl-[protein] = N(6)-octanoyl-L-lysyl-[protein] + holo-[ACP] + H(+). It functions in the pathway protein modification; protein lipoylation via endogenous pathway; protein N(6)-(lipoyl)lysine from octanoyl-[acyl-carrier-protein]: step 1/2. Catalyzes the transfer of endogenously produced octanoic acid from octanoyl-acyl-carrier-protein onto the lipoyl domains of lipoate-dependent enzymes. Lipoyl-ACP can also act as a substrate although octanoyl-ACP is likely to be the physiological substrate. The protein is Octanoyltransferase of Rhodococcus jostii (strain RHA1).